A 54-amino-acid chain; its full sequence is Preprotein translocase subunit SecG (54 aa).

Residues 1–30 lie on the Cytoplasmic side of the membrane; it reads MSKNKQDAGLSTSAGLVRYMDEDASKIKIA. Residues 31 to 52 form a helical membrane-spanning segment; the sequence is PEKVLGITISIMVLLFILNYGL. Residues 53 to 54 lie on the Extracellular side of the membrane; the sequence is LA.

It belongs to the SEC61-beta family. In terms of assembly, component of the protein translocase complex. Heterotrimer consisting of alpha (SecY), beta (SecG) and gamma (SecE) subunits. Can form oligomers of the heterotrimer.

The protein localises to the cell membrane. Its function is as follows. Involved in protein export. The function of the beta subunit is unknown, but it may be involved in stabilization of the trimeric complex. The polypeptide is Preprotein translocase subunit SecG (Methanococcus aeolicus (strain ATCC BAA-1280 / DSM 17508 / OCM 812 / Nankai-3)).